Reading from the N-terminus, the 410-residue chain is LL-diaminopimelate aminotransferase (410 aa).

Positions 15 and 42 each coordinate substrate. Pyridoxal 5'-phosphate contacts are provided by residues Tyr72, Ser108–Lys109, Tyr132, Asn187, Tyr218, and Ser246–Ser248. Lys109, Tyr132, and Asn187 together coordinate substrate. Lys249 carries the post-translational modification N6-(pyridoxal phosphate)lysine. Pyridoxal 5'-phosphate contacts are provided by Arg257 and Asn292. Asn292 and Arg388 together coordinate substrate.

This sequence belongs to the class-I pyridoxal-phosphate-dependent aminotransferase family. LL-diaminopimelate aminotransferase subfamily. As to quaternary structure, homodimer. The cofactor is pyridoxal 5'-phosphate.

The enzyme catalyses (2S,6S)-2,6-diaminopimelate + 2-oxoglutarate = (S)-2,3,4,5-tetrahydrodipicolinate + L-glutamate + H2O + H(+). Its pathway is amino-acid biosynthesis; L-lysine biosynthesis via DAP pathway; LL-2,6-diaminopimelate from (S)-tetrahydrodipicolinate (aminotransferase route): step 1/1. Functionally, involved in the synthesis of meso-diaminopimelate (m-DAP or DL-DAP), required for both lysine and peptidoglycan biosynthesis. Catalyzes the direct conversion of tetrahydrodipicolinate to LL-diaminopimelate. In Geotalea uraniireducens (strain Rf4) (Geobacter uraniireducens), this protein is LL-diaminopimelate aminotransferase.